Reading from the N-terminus, the 389-residue chain is Probable nitrate transporter NarT (389 aa).

12 helical membrane-spanning segments follow: residues Thr-14–Ile-34, Ile-45–Tyr-65, Ile-69–Phe-89, Gly-97–Val-117, Gly-139–Trp-159, Thr-161–Gly-181, Trp-211–Val-231, Gly-246–Phe-266, Ala-268–Ile-288, Leu-294–Phe-314, Ile-331–Ala-351, and Leu-353–Phe-373.

It belongs to the major facilitator superfamily. Nitrate/nitrite porter (TC 2.A.1.8) family.

It is found in the cell membrane. Its function is as follows. Probably required for nitrate uptake under anoxic conditions. Also possibly involved in excretion of nitrite produced by the dissimilatory reduction of nitrate. The chain is Probable nitrate transporter NarT (narT) from Staphylococcus aureus (strain MRSA252).